We begin with the raw amino-acid sequence, 500 residues long: Probable cytosol aminopeptidase (500 aa).

Lys267 and Asp272 together coordinate Mn(2+). The active site involves Lys279. Positions 290, 349, and 351 each coordinate Mn(2+). Arg353 is a catalytic residue.

This sequence belongs to the peptidase M17 family. Mn(2+) is required as a cofactor.

It is found in the cytoplasm. The enzyme catalyses Release of an N-terminal amino acid, Xaa-|-Yaa-, in which Xaa is preferably Leu, but may be other amino acids including Pro although not Arg or Lys, and Yaa may be Pro. Amino acid amides and methyl esters are also readily hydrolyzed, but rates on arylamides are exceedingly low.. It catalyses the reaction Release of an N-terminal amino acid, preferentially leucine, but not glutamic or aspartic acids.. Functionally, presumably involved in the processing and regular turnover of intracellular proteins. Catalyzes the removal of unsubstituted N-terminal amino acids from various peptides. This chain is Probable cytosol aminopeptidase, found in Tolumonas auensis (strain DSM 9187 / NBRC 110442 / TA 4).